We begin with the raw amino-acid sequence, 107 residues long: Large ribosomal subunit protein uL24 (107 aa).

The protein belongs to the universal ribosomal protein uL24 family. Part of the 50S ribosomal subunit.

One of two assembly initiator proteins, it binds directly to the 5'-end of the 23S rRNA, where it nucleates assembly of the 50S subunit. Its function is as follows. One of the proteins that surrounds the polypeptide exit tunnel on the outside of the subunit. The chain is Large ribosomal subunit protein uL24 from Thermotoga neapolitana (strain ATCC 49049 / DSM 4359 / NBRC 107923 / NS-E).